The chain runs to 494 residues: Aspartyl/glutamyl-tRNA(Asn/Gln) amidotransferase subunit B (494 aa).

This sequence belongs to the GatB/GatE family. GatB subfamily. Heterotrimer of A, B and C subunits.

The catalysed reaction is L-glutamyl-tRNA(Gln) + L-glutamine + ATP + H2O = L-glutaminyl-tRNA(Gln) + L-glutamate + ADP + phosphate + H(+). It carries out the reaction L-aspartyl-tRNA(Asn) + L-glutamine + ATP + H2O = L-asparaginyl-tRNA(Asn) + L-glutamate + ADP + phosphate + 2 H(+). Allows the formation of correctly charged Asn-tRNA(Asn) or Gln-tRNA(Gln) through the transamidation of misacylated Asp-tRNA(Asn) or Glu-tRNA(Gln) in organisms which lack either or both of asparaginyl-tRNA or glutaminyl-tRNA synthetases. The reaction takes place in the presence of glutamine and ATP through an activated phospho-Asp-tRNA(Asn) or phospho-Glu-tRNA(Gln). The protein is Aspartyl/glutamyl-tRNA(Asn/Gln) amidotransferase subunit B of Rhodopseudomonas palustris (strain ATCC BAA-98 / CGA009).